Reading from the N-terminus, the 127-residue chain is Gonadotropin subunit beta-1 (127 aa).

A signal peptide spans 1-22; sequence MHLAVTALCLTLAPVLARASTS. 6 disulfide bridges follow: C23-C71, C37-C86, C40-C124, C48-C102, C52-C104, and C107-C114. 2 N-linked (GlcNAc...) asparagine glycosylation sites follow: N27 and N44.

The protein belongs to the glycoprotein hormones subunit beta family. As to quaternary structure, heterodimer of an alpha and a beta chain.

It is found in the secreted. In terms of biological role, involved in gametogenesis and steroidogenesis. This Anguilla japonica (Japanese eel) protein is Gonadotropin subunit beta-1 (cgba).